Reading from the N-terminus, the 124-residue chain is Glycine cleavage system H protein (124 aa).

The Lipoyl-binding domain maps to threonine 19–lysine 101. Lysine 60 bears the N6-lipoyllysine mark.

The protein belongs to the GcvH family. As to quaternary structure, the glycine cleavage system is composed of four proteins: P, T, L and H. The cofactor is (R)-lipoate.

In terms of biological role, the glycine cleavage system catalyzes the degradation of glycine. The H protein shuttles the methylamine group of glycine from the P protein to the T protein. This is Glycine cleavage system H protein from Beijerinckia indica subsp. indica (strain ATCC 9039 / DSM 1715 / NCIMB 8712).